Consider the following 334-residue polypeptide: G-protein coupled receptor 12 (334 aa).

Residues 1 to 48 (MNEDLKVNLSGLPRDYLDAAAAENISAAVSSRVPAVEPEPELVVNPWD) lie on the Extracellular side of the membrane. N-linked (GlcNAc...) asparagine glycans are attached at residues asparagine 8 and asparagine 24. The chain crosses the membrane as a helical span at residues 49–69 (IVLCTSGTLISCENAIVVLII). Topologically, residues 70–77 (FHNPSLRA) are cytoplasmic. Residues 78-98 (PMFLLIGSLALADLLAGIGLI) form a helical membrane-spanning segment. At 99-113 (TNFVFAYLLQSEATK) the chain is on the extracellular side. The chain crosses the membrane as a helical span at residues 114–134 (LVTIGLIVASFSASVCSLLAI). At 135–158 (TVDRYLSLYYALTYHSERTVTFTY) the chain is on the cytoplasmic side. A helical transmembrane segment spans residues 159 to 179 (VMLVMLWGTSICLGLLPVMGW). Residues 180–199 (NCLRDESTCSVVRPLTKNNA) are Extracellular-facing. Residues 200–220 (AILSVSFLFMFALMLQLYIQI) traverse the membrane as a helical segment. At 221–252 (CKIVMRHAHQIALQHHFLATSHYVTTRKGVST) the chain is on the cytoplasmic side. The helical transmembrane segment at 253–273 (LAIILGTFAACWMPFTLYSLI) threads the bilayer. Over 274–282 (ADYTYPSIY) the chain is Extracellular. Residues 283–303 (TYATLLPATYNSIINPVIYAF) traverse the membrane as a helical segment. Residues 304–334 (RNQEIQKALCLICCGCIPSSLAQRARSPSDV) lie on the Cytoplasmic side of the membrane. Cysteine 317 carries S-palmitoyl cysteine lipidation. A phosphoserine mark is found at serine 330 and serine 332.

It belongs to the G-protein coupled receptor 1 family.

It is found in the cell membrane. Promotes neurite outgrowth and blocks myelin inhibition in neurons. Receptor with constitutive G(s) signaling activity that stimulates cyclic AMP production. In Homo sapiens (Human), this protein is G-protein coupled receptor 12 (GPR12).